The following is a 303-amino-acid chain: Coenzyme PQQ synthesis protein B (303 aa).

This sequence belongs to the PqqB family.

It participates in cofactor biosynthesis; pyrroloquinoline quinone biosynthesis. Functionally, may be involved in the transport of PQQ or its precursor to the periplasm. This chain is Coenzyme PQQ synthesis protein B, found in Pseudomonas fluorescens (strain Pf0-1).